The sequence spans 125 residues: Protein ApaG (125 aa).

The ApaG domain maps to Thr-3–Asn-125.

The chain is Protein ApaG from Anaeromyxobacter dehalogenans (strain 2CP-1 / ATCC BAA-258).